We begin with the raw amino-acid sequence, 64 residues long: MKASELHQKDQAALNKELSDLLKAQFGLRMQLATQQLTNTSQLKKVRRDIARVRTVLTEKANQK.

This sequence belongs to the universal ribosomal protein uL29 family.

The polypeptide is Large ribosomal subunit protein uL29 (Paraburkholderia phytofirmans (strain DSM 17436 / LMG 22146 / PsJN) (Burkholderia phytofirmans)).